Consider the following 343-residue polypeptide: Dihydroorotate dehydrogenase (quinone) (343 aa).

Residues 65 to 69 (AGFDK) and Thr-89 each bind FMN. Lys-69 is a substrate binding site. 114-118 (NRMGF) lines the substrate pocket. The FMN site is built by Asn-145 and Asn-178. Position 178 (Asn-178) interacts with substrate. The active-site Nucleophile is Ser-181. A substrate-binding site is contributed by Asn-183. Residues Lys-215 and Thr-243 each coordinate FMN. 244–245 (NT) is a substrate binding site. FMN is bound by residues Gly-269, Gly-298, and 319–320 (YT).

Belongs to the dihydroorotate dehydrogenase family. Type 2 subfamily. In terms of assembly, monomer. The cofactor is FMN.

The protein resides in the cell membrane. It carries out the reaction (S)-dihydroorotate + a quinone = orotate + a quinol. The protein operates within pyrimidine metabolism; UMP biosynthesis via de novo pathway; orotate from (S)-dihydroorotate (quinone route): step 1/1. Its function is as follows. Catalyzes the conversion of dihydroorotate to orotate with quinone as electron acceptor. The chain is Dihydroorotate dehydrogenase (quinone) from Leifsonia xyli subsp. xyli (strain CTCB07).